Reading from the N-terminus, the 464-residue chain is Myrosinase 1 (464 aa).

Residue Gln-19 participates in substrate binding. Residues His-39 and Asp-52 each coordinate Zn(2+). Residues His-122 and Asn-166 each coordinate substrate. The Nucleophile role is filled by Glu-167. Glu-374 functions as the Proton donor in the catalytic mechanism. Asn-397 carries N-linked (GlcNAc...) asparagine glycosylation.

As to quaternary structure, homodimer. In terms of tissue distribution, expressed in the skeletal muscle tissues surrounding the head, abdomen and thorax. Not expressed in flight muscles (at protein level).

It carries out the reaction a thioglucoside + H2O = a sugar + a thiol.. Its function is as follows. Hydrolyzes glucosinolates to a labile aglycone. This rapidly undergoes spontaneous rearrangement, eliminating sulfur to yield a number of toxic metabolites. Thereby developing a chemical defense system that exploits and mimics the host plant. The protein is Myrosinase 1 of Brevicoryne brassicae (Mealy cabbage aphid).